We begin with the raw amino-acid sequence, 158 residues long: NADH-quinone oxidoreductase subunit B (158 aa).

[4Fe-4S] cluster-binding residues include C37, C38, C102, and C132.

It belongs to the complex I 20 kDa subunit family. As to quaternary structure, NDH-1 is composed of 14 different subunits. Subunits NuoB, C, D, E, F, and G constitute the peripheral sector of the complex. Requires [4Fe-4S] cluster as cofactor.

Its subcellular location is the cell inner membrane. The enzyme catalyses a quinone + NADH + 5 H(+)(in) = a quinol + NAD(+) + 4 H(+)(out). Functionally, NDH-1 shuttles electrons from NADH, via FMN and iron-sulfur (Fe-S) centers, to quinones in the respiratory chain. Couples the redox reaction to proton translocation (for every two electrons transferred, four hydrogen ions are translocated across the cytoplasmic membrane), and thus conserves the redox energy in a proton gradient. The protein is NADH-quinone oxidoreductase subunit B of Leptothrix cholodnii (strain ATCC 51168 / LMG 8142 / SP-6) (Leptothrix discophora (strain SP-6)).